We begin with the raw amino-acid sequence, 78 residues long: Teretoxin Tsu6.15 (78 aa).

Positions 1-21 (MATSGRLLCFCLVLGLVFESL) are cleaved as a signal peptide. The propeptide occupies 22–47 (GYSEARPPRDRKRTVTAKRYDPLAQR).

Belongs to the teretoxin M (TM) superfamily. Post-translationally, contains 3 disulfide bonds. As to expression, expressed by the venom duct.

The protein resides in the secreted. The polypeptide is Teretoxin Tsu6.15 (Terebra subulata (Chocolate spotted auger)).